A 635-amino-acid polypeptide reads, in one-letter code: RING finger protein 207 (635 aa).

The RING-type zinc finger occupies 25 to 64; that stretch reads CPLCHGQYERPCLLDCFHDFCTGCLRGRATDGRLSCPLCQ. A B box-type; atypical zinc finger spans residues 93–145; that stretch reads SEAVRCANCDLECSQQDAETTYFCNTCGQPLCARCREETHRARMFARHDIVAL. Cys-98, Cys-101, Cys-127, and His-132 together coordinate Zn(2+). A coiled-coil region spans residues 422 to 460; it reads EHCRHYEDSYRGLQVEVQNLKDQVQELHRDLTKHHSLIK. The span at 553-562 shows a compositional bias: basic and acidic residues; sequence QVPVDEHAEH. The disordered stretch occupies residues 553–635; that stretch reads QVPVDEHAEH…SGSKGACYQA (83 aa). Residues 589–598 show a composition bias toward polar residues; it reads PNGSSWSLSS. Residues 607–622 are compositionally biased toward basic and acidic residues; it reads NQDHLRPKLEAGDEGW.

In terms of assembly, interacts with the core-glycosylated, but not the fully glycosylated form of KCNH2/HERG. Interacts with DNAJA1 and HSPA8. Interacts (via the C-terminus) with HSPA1A; this interaction additively increases KCNH2 expression.

It localises to the cytoplasm. In terms of biological role, plays a role in cardiac repolarization possibly by stabilizing membrane expression of the potassium channel KCNH2/HERG, or by assisting its synthesis, folding or export from the endoplasmic reticulum, in a heat shock protein-dependent manner. This chain is RING finger protein 207 (Rnf207), found in Mus musculus (Mouse).